A 682-amino-acid chain; its full sequence is Potassium-transporting ATPase ATP-binding subunit (682 aa).

Helical transmembrane passes span 34 to 54, 62 to 82, 219 to 239, and 254 to 274; these read PVMF…IAMA, ALFS…ANFA, IALT…TATL, and VLVA…LSAI. The active-site 4-aspartylphosphate intermediate is Asp307. ATP contacts are provided by residues Asp344, Glu348, 377–384, and Lys395; that span reads FTAQSRMS. Asp518 and Asp522 together coordinate Mg(2+). The next 3 membrane-spanning stretches (helical) occupy residues 588 to 608, 616 to 636, and 656 to 676; these read FAII…LNIM, AILS…PLAL, and IYGL…DLLL.

It belongs to the cation transport ATPase (P-type) (TC 3.A.3) family. Type IA subfamily. The system is composed of three essential subunits: KdpA, KdpB and KdpC.

It localises to the cell inner membrane. The enzyme catalyses K(+)(out) + ATP + H2O = K(+)(in) + ADP + phosphate + H(+). Part of the high-affinity ATP-driven potassium transport (or Kdp) system, which catalyzes the hydrolysis of ATP coupled with the electrogenic transport of potassium into the cytoplasm. This subunit is responsible for energy coupling to the transport system and for the release of the potassium ions to the cytoplasm. The sequence is that of Potassium-transporting ATPase ATP-binding subunit from Escherichia coli (strain ATCC 8739 / DSM 1576 / NBRC 3972 / NCIMB 8545 / WDCM 00012 / Crooks).